We begin with the raw amino-acid sequence, 642 residues long: Threonine--tRNA ligase (642 aa).

The TGS domain maps to 1-61; that stretch reads MPVIRFCDGS…TEDSSISFIS (61 aa). Residues 243–534 form a catalytic region; that stretch reads DHRKIGKLLN…LIEEFSGKLP (292 aa). Positions 334, 385, and 511 each coordinate Zn(2+).

Belongs to the class-II aminoacyl-tRNA synthetase family. In terms of assembly, homodimer. It depends on Zn(2+) as a cofactor.

The protein localises to the cytoplasm. It carries out the reaction tRNA(Thr) + L-threonine + ATP = L-threonyl-tRNA(Thr) + AMP + diphosphate + H(+). In terms of biological role, catalyzes the attachment of threonine to tRNA(Thr) in a two-step reaction: L-threonine is first activated by ATP to form Thr-AMP and then transferred to the acceptor end of tRNA(Thr). Also edits incorrectly charged L-seryl-tRNA(Thr). This Buchnera aphidicola subsp. Schizaphis graminum (strain Sg) protein is Threonine--tRNA ligase.